A 237-amino-acid polypeptide reads, in one-letter code: Ribonuclease PH (237 aa).

Phosphate-binding positions include Arg-86 and 124 to 126 (GTR).

The protein belongs to the RNase PH family. Homohexameric ring arranged as a trimer of dimers.

The catalysed reaction is tRNA(n+1) + phosphate = tRNA(n) + a ribonucleoside 5'-diphosphate. Its function is as follows. Phosphorolytic 3'-5' exoribonuclease that plays an important role in tRNA 3'-end maturation. Removes nucleotide residues following the 3'-CCA terminus of tRNAs; can also add nucleotides to the ends of RNA molecules by using nucleoside diphosphates as substrates, but this may not be physiologically important. Probably plays a role in initiation of 16S rRNA degradation (leading to ribosome degradation) during starvation. The chain is Ribonuclease PH from Coxiella burnetii (strain RSA 331 / Henzerling II).